Reading from the N-terminus, the 247-residue chain is NAD(P)H-quinone oxidoreductase subunit K (247 aa).

[4Fe-4S] cluster-binding residues include Cys-63, Cys-64, Cys-128, and Cys-159. The interval 218–247 (TRQAPPKELTEAIGMEVPPALASQKQKEEA) is disordered.

It belongs to the complex I 20 kDa subunit family. NDH-1 can be composed of about 15 different subunits; different subcomplexes with different compositions have been identified which probably have different functions. [4Fe-4S] cluster is required as a cofactor.

The protein localises to the cellular thylakoid membrane. The enzyme catalyses a plastoquinone + NADH + (n+1) H(+)(in) = a plastoquinol + NAD(+) + n H(+)(out). It catalyses the reaction a plastoquinone + NADPH + (n+1) H(+)(in) = a plastoquinol + NADP(+) + n H(+)(out). In terms of biological role, NDH-1 shuttles electrons from an unknown electron donor, via FMN and iron-sulfur (Fe-S) centers, to quinones in the respiratory and/or the photosynthetic chain. The immediate electron acceptor for the enzyme in this species is believed to be plastoquinone. Couples the redox reaction to proton translocation, and thus conserves the redox energy in a proton gradient. Cyanobacterial NDH-1 also plays a role in inorganic carbon-concentration. The protein is NAD(P)H-quinone oxidoreductase subunit K of Crocosphaera subtropica (strain ATCC 51142 / BH68) (Cyanothece sp. (strain ATCC 51142)).